Consider the following 542-residue polypeptide: Chaperonin GroEL (542 aa).

Residues 29-32, 86-90, G413, 476-478, and D492 each bind ATP; these read TLGP, DGTTT, and NAA.

Belongs to the chaperonin (HSP60) family. As to quaternary structure, forms a cylinder of 14 subunits composed of two heptameric rings stacked back-to-back. Interacts with the co-chaperonin GroES.

Its subcellular location is the cytoplasm. It carries out the reaction ATP + H2O + a folded polypeptide = ADP + phosphate + an unfolded polypeptide.. Functionally, together with its co-chaperonin GroES, plays an essential role in assisting protein folding. The GroEL-GroES system forms a nano-cage that allows encapsulation of the non-native substrate proteins and provides a physical environment optimized to promote and accelerate protein folding. The protein is Chaperonin GroEL of Listeria welshimeri serovar 6b (strain ATCC 35897 / DSM 20650 / CCUG 15529 / CIP 8149 / NCTC 11857 / SLCC 5334 / V8).